The primary structure comprises 177 residues: Chorismate pyruvate-lyase (177 aa).

Substrate-binding residues include M37, R79, L117, and E159.

This sequence belongs to the UbiC family. In terms of assembly, monomer.

It localises to the cytoplasm. It catalyses the reaction chorismate = 4-hydroxybenzoate + pyruvate. It participates in cofactor biosynthesis; ubiquinone biosynthesis. In terms of biological role, removes the pyruvyl group from chorismate, with concomitant aromatization of the ring, to provide 4-hydroxybenzoate (4HB) for the ubiquinone pathway. The protein is Chorismate pyruvate-lyase of Sodalis glossinidius (strain morsitans).